Here is a 320-residue protein sequence, read N- to C-terminus: MRLPSRQQVLKMLATFSLALGLFAAKVQAHGGVIGYSWDGTWYEGWHPYNTPVGQTSIERPWATFDPIMDATASTVGCNNDGNPGPNQLTATVAAGTAITAYWNQVWPHPYGPMTTYLGKCPGSSCDGVNTNSLKWFKIDEAGLLSGTVGKGVWGSGKMIDQNNSWTTTIPSTVPSGAYMIRFETIALHSLPAQIYPECAQLTITGGGNRAPTSSELVSFPGGYSNSDPGLTVNLYTQEAMTDTTYIVPGPPLYGSGGNGGSPTTTPHTTTPITTSPPPTSTPGTIPQYGQCGGIGWTGGTGCVAPYQCKVINDYYSQCL.

The signal sequence occupies residues 1–29; it reads MRLPSRQQVLKMLATFSLALGLFAAKVQA. 2 disulfide bridges follow: cysteine 78–cysteine 199 and cysteine 121–cysteine 126. Histidine 109 provides a ligand contact to Cu(2+). Asparagine 163 carries an N-linked (GlcNAc...) asparagine glycan. O2 contacts are provided by histidine 189 and glutamine 194. Tyrosine 196 is a binding site for Cu(2+). The interval 255 to 284 is disordered; that stretch reads GSGGNGGSPTTTPHTTTPITTSPPPTSTPG. Low complexity predominate over residues 262 to 274; that stretch reads SPTTTPHTTTPIT. Positions 284–320 constitute a CBM1 domain; that stretch reads GTIPQYGQCGGIGWTGGTGCVAPYQCKVINDYYSQCL.

Belongs to the polysaccharide monooxygenase AA9 family. It depends on Cu(2+) as a cofactor.

It is found in the secreted. The enzyme catalyses [(1-&gt;4)-beta-D-glucosyl]n+m + reduced acceptor + O2 = 4-dehydro-beta-D-glucosyl-[(1-&gt;4)-beta-D-glucosyl]n-1 + [(1-&gt;4)-beta-D-glucosyl]m + acceptor + H2O.. Functionally, lytic polysaccharide monooxygenase (LPMO)-like protein that binds strongly to cellulose. Seems not to acts as an endoglucanase, a ceUobiohydrolase able to hydrolyze fluorogenic cellobiosides, a /3-glucosidase, a xylanase, nor a cellobiose:quinone oxidoreductase. The sequence is that of AA9 family lytic polysaccharide monooxygenase-like protein CEL1 from Agaricus bisporus (White button mushroom).